The primary structure comprises 138 residues: Urease subunit beta (138 aa).

Residues 115–138 (RMRAAGFGDTGEAAPDDGDTESDQ) are disordered. Over residues 128–138 (APDDGDTESDQ) the composition is skewed to acidic residues.

This sequence belongs to the urease beta subunit family. As to quaternary structure, heterotrimer of UreA (gamma), UreB (beta) and UreC (alpha) subunits. Three heterotrimers associate to form the active enzyme.

The protein localises to the cytoplasm. It carries out the reaction urea + 2 H2O + H(+) = hydrogencarbonate + 2 NH4(+). It functions in the pathway nitrogen metabolism; urea degradation; CO(2) and NH(3) from urea (urease route): step 1/1. The sequence is that of Urease subunit beta from Haloarcula marismortui (strain ATCC 43049 / DSM 3752 / JCM 8966 / VKM B-1809) (Halobacterium marismortui).